A 394-amino-acid chain; its full sequence is MEFLQNIKKNYDEWTRITPQGLLYDRALFWLFVILLLIGLVAVTSASIPYSSRLFNDPFYFAKRDAIYVLLSLLTCYISLQISSSQWEKWHAKIFLFSVILLLLVPFIGTSVNGAKRWISLGILNFQPAEFAKLALTCFLASYFTRRYDEVRSRHVSIFKPFIVMLVLGCFLLLQPDLGSTVVLFIIMSGMLFIVGAKILQFVGLIALGGILFVWLVLTASYRLKRFIGFLEPFKEPYGTGFQLTNSLIAFGRGEITGEGLGNSIQKLDYLPEAHTDFIMAIIGEEFGFIGILIVILLLGLLIFRAMKIGRESLMLEQRFRGFFALGIGFWIFFQGFVNLGMALGMLPTKGLTFPLVSYGGSSIIIMSATIGILLRIDHENRLFRIGQARLRDD.

Topologically, residues 1 to 27 (MEFLQNIKKNYDEWTRITPQGLLYDRA) are cytoplasmic. A helical membrane pass occupies residues 28-48 (LFWLFVILLLIGLVAVTSASI). At 49–66 (PYSSRLFNDPFYFAKRDA) the chain is on the periplasmic side. A helical transmembrane segment spans residues 67–87 (IYVLLSLLTCYISLQISSSQW). Over 88 to 93 (EKWHAK) the chain is Cytoplasmic. A helical transmembrane segment spans residues 94-114 (IFLFSVILLLLVPFIGTSVNG). The Periplasmic portion of the chain corresponds to 115 to 120 (AKRWIS). A helical membrane pass occupies residues 121-141 (LGILNFQPAEFAKLALTCFLA). The Cytoplasmic segment spans residues 142-155 (SYFTRRYDEVRSRH). A run of 2 helical transmembrane segments spans residues 156–176 (VSIF…LLQP) and 177–197 (DLGS…IVGA). Lysine 198 is a topological domain (cytoplasmic). A helical membrane pass occupies residues 199–219 (ILQFVGLIALGGILFVWLVLT). The Periplasmic portion of the chain corresponds to 220–277 (ASYRLKRFIGFLEPFKEPYGTGFQLTNSLIAFGRGEITGEGLGNSIQKLDYLPEAHTD). The chain crosses the membrane as a helical span at residues 278 to 298 (FIMAIIGEEFGFIGILIVILL). The Cytoplasmic segment spans residues 299 to 322 (LGLLIFRAMKIGRESLMLEQRFRG). The chain crosses the membrane as a helical span at residues 323-343 (FFALGIGFWIFFQGFVNLGMA). The Periplasmic segment spans residues 344-353 (LGMLPTKGLT). A helical membrane pass occupies residues 354-374 (FPLVSYGGSSIIIMSATIGIL). Residues 375–394 (LRIDHENRLFRIGQARLRDD) are Cytoplasmic-facing.

This sequence belongs to the SEDS family. FtsW subfamily.

It localises to the cell inner membrane. It catalyses the reaction [GlcNAc-(1-&gt;4)-Mur2Ac(oyl-L-Ala-gamma-D-Glu-L-Lys-D-Ala-D-Ala)](n)-di-trans,octa-cis-undecaprenyl diphosphate + beta-D-GlcNAc-(1-&gt;4)-Mur2Ac(oyl-L-Ala-gamma-D-Glu-L-Lys-D-Ala-D-Ala)-di-trans,octa-cis-undecaprenyl diphosphate = [GlcNAc-(1-&gt;4)-Mur2Ac(oyl-L-Ala-gamma-D-Glu-L-Lys-D-Ala-D-Ala)](n+1)-di-trans,octa-cis-undecaprenyl diphosphate + di-trans,octa-cis-undecaprenyl diphosphate + H(+). Its pathway is cell wall biogenesis; peptidoglycan biosynthesis. Its function is as follows. Peptidoglycan polymerase that is essential for cell division. The sequence is that of Probable peptidoglycan glycosyltransferase FtsW from Haemophilus influenzae (strain ATCC 51907 / DSM 11121 / KW20 / Rd).